The following is a 197-amino-acid chain: ATP-dependent Clp protease proteolytic subunit 1 (197 aa).

Residue Ser-96 is the Nucleophile of the active site. The active site involves His-121.

Belongs to the peptidase S14 family. Fourteen ClpP subunits assemble into 2 heptameric rings which stack back to back to give a disk-like structure with a central cavity, resembling the structure of eukaryotic proteasomes.

Its subcellular location is the cytoplasm. It carries out the reaction Hydrolysis of proteins to small peptides in the presence of ATP and magnesium. alpha-casein is the usual test substrate. In the absence of ATP, only oligopeptides shorter than five residues are hydrolyzed (such as succinyl-Leu-Tyr-|-NHMec, and Leu-Tyr-Leu-|-Tyr-Trp, in which cleavage of the -Tyr-|-Leu- and -Tyr-|-Trp bonds also occurs).. Functionally, cleaves peptides in various proteins in a process that requires ATP hydrolysis. Has a chymotrypsin-like activity. Plays a major role in the degradation of misfolded proteins. This Synechococcus sp. (strain ATCC 27144 / PCC 6301 / SAUG 1402/1) (Anacystis nidulans) protein is ATP-dependent Clp protease proteolytic subunit 1.